The primary structure comprises 169 residues: ATP synthase subunit b (169 aa).

A helical membrane pass occupies residues 3–23 (IKILLLVLPFFAFASEHGGVN).

This sequence belongs to the ATPase B chain family. As to quaternary structure, F-type ATPases have 2 components, F(1) - the catalytic core - and F(0) - the membrane proton channel. F(1) has five subunits: alpha(3), beta(3), gamma(1), delta(1), epsilon(1). F(0) has three main subunits: a(1), b(2) and c(10-14). The alpha and beta chains form an alternating ring which encloses part of the gamma chain. F(1) is attached to F(0) by a central stalk formed by the gamma and epsilon chains, while a peripheral stalk is formed by the delta and b chains.

It localises to the cell inner membrane. In terms of biological role, f(1)F(0) ATP synthase produces ATP from ADP in the presence of a proton or sodium gradient. F-type ATPases consist of two structural domains, F(1) containing the extramembraneous catalytic core and F(0) containing the membrane proton channel, linked together by a central stalk and a peripheral stalk. During catalysis, ATP synthesis in the catalytic domain of F(1) is coupled via a rotary mechanism of the central stalk subunits to proton translocation. Component of the F(0) channel, it forms part of the peripheral stalk, linking F(1) to F(0). The sequence is that of ATP synthase subunit b from Campylobacter curvus (strain 525.92).